The sequence spans 461 residues: tRNA modification GTPase MnmE (461 aa).

(6S)-5-formyl-5,6,7,8-tetrahydrofolate contacts are provided by arginine 20, glutamate 85, and lysine 124. The 163-residue stretch at 221-383 (GIPVAIIGET…LQQLLTEVSS (163 aa)) folds into the TrmE-type G domain. A K(+)-binding site is contributed by asparagine 231. GTP-binding positions include 231-236 (NAGKST), 250-256 (SDIHGTT), and 275-278 (DTAG). Residue serine 235 participates in Mg(2+) binding. Positions 250, 252, and 255 each coordinate K(+). Threonine 256 contributes to the Mg(2+) binding site. Lysine 461 provides a ligand contact to (6S)-5-formyl-5,6,7,8-tetrahydrofolate.

The protein belongs to the TRAFAC class TrmE-Era-EngA-EngB-Septin-like GTPase superfamily. TrmE GTPase family. As to quaternary structure, homodimer. Heterotetramer of two MnmE and two MnmG subunits. Requires K(+) as cofactor.

It localises to the cytoplasm. Functionally, exhibits a very high intrinsic GTPase hydrolysis rate. Involved in the addition of a carboxymethylaminomethyl (cmnm) group at the wobble position (U34) of certain tRNAs, forming tRNA-cmnm(5)s(2)U34. The sequence is that of tRNA modification GTPase MnmE from Parabacteroides distasonis (strain ATCC 8503 / DSM 20701 / CIP 104284 / JCM 5825 / NCTC 11152).